The sequence spans 445 residues: 2-oxoisovalerate dehydrogenase subunit alpha, mitochondrial (445 aa).

A mitochondrion-targeting transit peptide spans 1-45 (MAVAIAAARVWRLNRGLSQAALLLLRRPGARGLARSHPRRQQQQF). The interval 33–54 (LARSHPRRQQQQFSSLDDKPQF) is disordered. The thiamine diphosphate site is built by Y158 and R159. S206 lines the K(+) pocket. S207 is a thiamine diphosphate binding site. K(+)-binding residues include P208, T211, and Q212. E238 provides a ligand contact to Mg(2+). Residues G239, A240, and R265 each coordinate thiamine diphosphate. N267 and Y269 together coordinate Mg(2+). H336 lines the thiamine diphosphate pocket. S337 is subject to Phosphoserine; by BCKDK. At T338 the chain carries Phosphothreonine. S339 and S347 each carry phosphoserine. An N6-acetyllysine; alternate modification is found at K356. K356 is subject to N6-succinyllysine; alternate. K380 carries the N6-succinyllysine modification.

This sequence belongs to the BCKDHA family. As to quaternary structure, heterotetramer of 2 alpha/BCKDHA and 2 beta chains/BCKDHB that forms the branched-chain alpha-keto acid decarboxylase (E1) component of the BCKD complex. The branched-chain alpha-ketoacid dehydrogenase is a large complex composed of three major building blocks E1, E2 and E3. It is organized around E2, a 24-meric cubic core composed of DBT, to which are associated 6 to 12 copies of E1, and approximately 6 copies of the dehydrogenase E3, a DLD dimer. Interacts with PPM1K. The cofactor is thiamine diphosphate. Requires Mg(2+) as cofactor. In terms of processing, phosphorylated at Ser-337 by BCKDK and dephosphorylated by protein phosphatase PPM1K.

It localises to the mitochondrion matrix. The enzyme catalyses N(6)-[(R)-lipoyl]-L-lysyl-[protein] + 3-methyl-2-oxobutanoate + H(+) = N(6)-[(R)-S(8)-2-methylpropanoyldihydrolipoyl]-L-lysyl-[protein] + CO2. In terms of biological role, together with BCKDHB forms the heterotetrameric E1 subunit of the mitochondrial branched-chain alpha-ketoacid dehydrogenase (BCKD) complex. The BCKD complex catalyzes the multi-step oxidative decarboxylation of alpha-ketoacids derived from the branched-chain amino-acids valine, leucine and isoleucine producing CO2 and acyl-CoA which is subsequently utilized to produce energy. The E1 subunit catalyzes the first step with the decarboxylation of the alpha-ketoacid forming an enzyme-product intermediate. A reductive acylation mediated by the lipoylamide cofactor of E2 extracts the acyl group from the E1 active site for the next step of the reaction. The sequence is that of 2-oxoisovalerate dehydrogenase subunit alpha, mitochondrial (BCKDHA) from Pan troglodytes (Chimpanzee).